We begin with the raw amino-acid sequence, 142 residues long: Large ribosomal subunit protein uL13 (142 aa).

It belongs to the universal ribosomal protein uL13 family. In terms of assembly, part of the 50S ribosomal subunit.

Its function is as follows. This protein is one of the early assembly proteins of the 50S ribosomal subunit, although it is not seen to bind rRNA by itself. It is important during the early stages of 50S assembly. This is Large ribosomal subunit protein uL13 from Acinetobacter baumannii (strain AB0057).